A 365-amino-acid polypeptide reads, in one-letter code: tRNA 2-selenouridine synthase (365 aa).

The region spanning 12–136 is the Rhodanese domain; sequence FLHDVPLLDV…LRMFLIDTTQ (125 aa). Cysteine 95 serves as the catalytic S-selanylcysteine intermediate.

The protein belongs to the SelU family. In terms of assembly, monomer.

It carries out the reaction 5-methylaminomethyl-2-thiouridine(34) in tRNA + selenophosphate + (2E)-geranyl diphosphate + H2O + H(+) = 5-methylaminomethyl-2-selenouridine(34) in tRNA + (2E)-thiogeraniol + phosphate + diphosphate. It catalyses the reaction 5-methylaminomethyl-2-thiouridine(34) in tRNA + (2E)-geranyl diphosphate = 5-methylaminomethyl-S-(2E)-geranyl-thiouridine(34) in tRNA + diphosphate. The catalysed reaction is 5-methylaminomethyl-S-(2E)-geranyl-thiouridine(34) in tRNA + selenophosphate + H(+) = 5-methylaminomethyl-2-(Se-phospho)selenouridine(34) in tRNA + (2E)-thiogeraniol. The enzyme catalyses 5-methylaminomethyl-2-(Se-phospho)selenouridine(34) in tRNA + H2O = 5-methylaminomethyl-2-selenouridine(34) in tRNA + phosphate. Functionally, involved in the post-transcriptional modification of the uridine at the wobble position (U34) of tRNA(Lys), tRNA(Glu) and tRNA(Gln). Catalyzes the conversion of 2-thiouridine (S2U-RNA) to 2-selenouridine (Se2U-RNA). Acts in a two-step process involving geranylation of 2-thiouridine (S2U) to S-geranyl-2-thiouridine (geS2U) and subsequent selenation of the latter derivative to 2-selenouridine (Se2U) in the tRNA chain. In Verminephrobacter eiseniae (strain EF01-2), this protein is tRNA 2-selenouridine synthase.